Reading from the N-terminus, the 389-residue chain is Mitochondrial tRNA-specific 2-thiouridylase 1 (389 aa).

Residues 8–15 and methionine 34 contribute to the ATP site; that span reads GVSGGVDS. The segment at 94–96 is interaction with target base in tRNA; that stretch reads NPD. Cysteine 99 serves as the catalytic Nucleophile. A disulfide bond links cysteine 99 and cysteine 205. Residue glycine 124 coordinates ATP. The interaction with tRNA stretch occupies residues 154-156; sequence KDQ. Catalysis depends on cysteine 205, which acts as the Cysteine persulfide intermediate. An interaction with tRNA region spans residues 317–318; the sequence is QH.

This sequence belongs to the MnmA/TRMU family.

Its subcellular location is the mitochondrion. The catalysed reaction is 5-taurinomethyluridine(34) in tRNA + S-sulfanyl-L-cysteinyl-[protein] + AH2 + ATP = 5-taurinomethyl-2-thiouridine(34) in tRNA + L-cysteinyl-[protein] + A + AMP + diphosphate + H(+). In terms of biological role, catalyzes the 2-thiolation of uridine at the wobble position (U34) of mitochondrial tRNA(Lys), tRNA(Glu) and tRNA(Gln). Required for the formation of 5-taurinomethyl-2-thiouridine (tm5s2U) of mitochondrial tRNA(Lys), tRNA(Glu), and tRNA(Gln) at the wobble position. ATP is required to activate the C2 atom of the wobble base. The polypeptide is Mitochondrial tRNA-specific 2-thiouridylase 1 (Drosophila melanogaster (Fruit fly)).